A 610-amino-acid chain; its full sequence is UvrABC system protein C (610 aa).

A GIY-YIG domain is found at 16 to 94 (SQPGVYRMYD…IKLYQPRYNV (79 aa)). One can recognise a UVR domain in the interval 204–239 (QQVLHQLIERMENASKALNFEEAARIRDQIQAVRRV).

It belongs to the UvrC family. As to quaternary structure, interacts with UvrB in an incision complex.

It localises to the cytoplasm. The UvrABC repair system catalyzes the recognition and processing of DNA lesions. UvrC both incises the 5' and 3' sides of the lesion. The N-terminal half is responsible for the 3' incision and the C-terminal half is responsible for the 5' incision. This is UvrABC system protein C from Serratia proteamaculans (strain 568).